The primary structure comprises 419 residues: Acyl-coenzyme A thioesterase 1 (419 aa).

Catalysis depends on charge relay system residues serine 232, aspartate 324, and histidine 358. Serine 416 carries the phosphoserine modification.

Belongs to the C/M/P thioester hydrolase family. Monomer. In terms of tissue distribution, expressed in heart, kidney, brown adipose tissue, white adipose tissue, adrenal gland and muscle.

The protein localises to the cytoplasm. It is found in the cytosol. The catalysed reaction is hexadecanoyl-CoA + H2O = hexadecanoate + CoA + H(+). It carries out the reaction decanoyl-CoA + H2O = decanoate + CoA + H(+). It catalyses the reaction dodecanoyl-CoA + H2O = dodecanoate + CoA + H(+). The enzyme catalyses tetradecanoyl-CoA + H2O = tetradecanoate + CoA + H(+). The catalysed reaction is octadecanoyl-CoA + H2O = octadecanoate + CoA + H(+). It carries out the reaction eicosanoyl-CoA + H2O = eicosanoate + CoA + H(+). It catalyses the reaction (9Z)-octadecenoyl-CoA + H2O = (9Z)-octadecenoate + CoA + H(+). The enzyme catalyses (9Z)-hexadecenoyl-CoA + H2O = (9Z)-hexadecenoate + CoA + H(+). The catalysed reaction is (9E)-octadecenoyl-CoA + H2O = (9E)-octadecenoate + CoA + H(+). It functions in the pathway lipid metabolism; fatty acid metabolism. In terms of biological role, catalyzes the hydrolysis of acyl-CoAs into free fatty acids and coenzyme A (CoASH), regulating their respective intracellular levels. More active towards saturated and unsaturated long chain fatty acyl-CoAs (C12-C20). This is Acyl-coenzyme A thioesterase 1 (Acot1) from Mus musculus (Mouse).